The following is a 184-amino-acid chain: MESFSSKSLALQAEKKLLSKMAGRSVAHLFIDETSSEVLDELYRVSKEYTHSRPQAQRVIKDLIKVAVKVAVLHRSGCFGSSELALATRFREKLRQGAMTALSFGEVDFTFEAAVLADLLTECRDVLLELVERHLTPKSHSRIRHVFDHFSDPGLLTALYGPEFTQHLGKICDGLRKLLDEGKL.

Phosphoserine is present on Ser-3.

Belongs to the TNFAIP8 family. TNFAIP8L2 subfamily. May interact with CASP8; however, such result is unclear since could not reproduce the interaction with CASP8. Interacts with RAC1. Phosphorylated by TAK1/MAP3K7; this phosphorylation triggers association with BTRC and subsequent ubiquitination and degradation. In terms of processing, ubiquitinated in a BTRC-depdent manner; leading to degradation mediated through the proteasome pathway.

Its subcellular location is the cytoplasm. It localises to the nucleus. It is found in the lysosome. Acts as a negative regulator of innate and adaptive immunity by maintaining immune homeostasis. Plays a regulatory role in the Toll-like signaling pathway by determining the strength of LPS-induced signaling and gene expression. Inhibits TCR-mediated T-cell activation and negatively regulate T-cell function to prevent hyperresponsiveness. Also inhibits autolysosome formation via negatively modulating MTOR activation by interacting with RAC1 and promoting the disassociation of the RAC1-MTOR complex. Plays an essential role in NK-cell biology by acting as a checkpoint and displaying an expression pattern correlating with NK-cell maturation process and by negatively regulating NK-cell maturation and antitumor immunity. Mechanistically, suppresses IL-15-triggered mTOR activity in NK-cells. The protein is Tumor necrosis factor alpha-induced protein 8-like protein 2 (TNFAIP8L2) of Otolemur garnettii (Small-eared galago).